A 301-amino-acid polypeptide reads, in one-letter code: Glycine--tRNA ligase alpha subunit (301 aa).

It belongs to the class-II aminoacyl-tRNA synthetase family. Tetramer of two alpha and two beta subunits.

The protein localises to the cytoplasm. It catalyses the reaction tRNA(Gly) + glycine + ATP = glycyl-tRNA(Gly) + AMP + diphosphate. The polypeptide is Glycine--tRNA ligase alpha subunit (Shewanella baltica (strain OS223)).